Reading from the N-terminus, the 382-residue chain is Alkanesulfonate monooxygenase (382 aa).

It belongs to the SsuD family.

It carries out the reaction an alkanesulfonate + FMNH2 + O2 = an aldehyde + FMN + sulfite + H2O + 2 H(+). Its function is as follows. Catalyzes the desulfonation of aliphatic sulfonates. This chain is Alkanesulfonate monooxygenase, found in Pseudomonas sp.